The primary structure comprises 499 residues: Probable cytosol aminopeptidase (499 aa).

Mn(2+) contacts are provided by Lys267 and Asp272. The active site involves Lys279. Asp290, Asp349, and Glu351 together coordinate Mn(2+). Residue Arg353 is part of the active site.

This sequence belongs to the peptidase M17 family. Requires Mn(2+) as cofactor.

It is found in the cytoplasm. It catalyses the reaction Release of an N-terminal amino acid, Xaa-|-Yaa-, in which Xaa is preferably Leu, but may be other amino acids including Pro although not Arg or Lys, and Yaa may be Pro. Amino acid amides and methyl esters are also readily hydrolyzed, but rates on arylamides are exceedingly low.. It carries out the reaction Release of an N-terminal amino acid, preferentially leucine, but not glutamic or aspartic acids.. Its function is as follows. Presumably involved in the processing and regular turnover of intracellular proteins. Catalyzes the removal of unsubstituted N-terminal amino acids from various peptides. This is Probable cytosol aminopeptidase from Alkaliphilus oremlandii (strain OhILAs) (Clostridium oremlandii (strain OhILAs)).